We begin with the raw amino-acid sequence, 98 residues long: NADH-ubiquinone oxidoreductase chain 4L (98 aa).

3 consecutive transmembrane segments (helical) span residues 1-21, 26-46, and 61-81; these read MNLIDLILIAIYVIGISGLIF, IINILIISELNLGTLGMLFVL, and LYILTFTAAESAIGLAIVVIL.

It belongs to the complex I subunit 4L family.

It is found in the mitochondrion membrane. The catalysed reaction is a ubiquinone + NADH + 5 H(+)(in) = a ubiquinol + NAD(+) + 4 H(+)(out). Functionally, core subunit of the mitochondrial membrane respiratory chain NADH dehydrogenase (Complex I) that is believed to belong to the minimal assembly required for catalysis. Complex I functions in the transfer of electrons from NADH to the respiratory chain. The immediate electron acceptor for the enzyme is believed to be ubiquinone. The polypeptide is NADH-ubiquinone oxidoreductase chain 4L (nad4L) (Dictyostelium discoideum (Social amoeba)).